A 276-amino-acid chain; its full sequence is Rho-related protein racO (276 aa).

G11–T18 is a GTP binding site. The short motif at Y34–L42 is the Effector region element. GTP contacts are provided by residues E60 to F64 and I124 to D127. The interval F199–S276 is disordered. Residues K200–T270 are compositionally biased toward low complexity. A Cysteine methyl ester modification is found at C273. A lipid anchor (S-geranylgeranyl cysteine) is attached at C273. Positions K274 to S276 are cleaved as a propeptide — removed in mature form.

It belongs to the small GTPase superfamily. Rho family.

It localises to the cell membrane. The protein is Rho-related protein racO (racO) of Dictyostelium discoideum (Social amoeba).